A 480-amino-acid polypeptide reads, in one-letter code: Phosphoglucosamine mutase (480 aa).

A disordered region spans residues 1–41 (MPKHTKKDPREGAPSATGEPQKQAAGRKLFGTDGVRGVANQ). The active-site Phosphoserine intermediate is the Ser127. Mg(2+)-binding residues include Ser127, Asp269, Asp271, and Asp273. Ser127 is subject to Phosphoserine.

This sequence belongs to the phosphohexose mutase family. Mg(2+) is required as a cofactor. In terms of processing, activated by phosphorylation.

The enzyme catalyses alpha-D-glucosamine 1-phosphate = D-glucosamine 6-phosphate. In terms of biological role, catalyzes the conversion of glucosamine-6-phosphate to glucosamine-1-phosphate. This chain is Phosphoglucosamine mutase, found in Sorangium cellulosum (strain So ce56) (Polyangium cellulosum (strain So ce56)).